The chain runs to 539 residues: Oviduct-specific glycoprotein (539 aa).

An N-terminal signal peptide occupies residues 1–21 (MGKLLLWVGLLLMLKHHDGAA). Residues 22–385 (HKLVCYFTNW…HTLNNLLVND (364 aa)) form the GH18 domain. A disulfide bond links Cys-26 and Cys-51. Chitin-binding positions include 71–72 (PL), 98–101 (GGWN), Tyr-142, 211–214 (LSYD), and Trp-355. A glycan (N-linked (GlcNAc...) asparagine) is linked at Asn-402. Disordered stretches follow at residues 433-480 (TETH…KPLT) and 503-539 (QKVTPPGRKAGVPEKVTIPSGKMTVTPDGRAETLERL). The segment covering 440 to 457 (ATMTTTPRGETATPTRTP) has biased composition (low complexity).

This sequence belongs to the glycosyl hydrolase 18 family. Oviduct.

It localises to the cytoplasmic vesicle. It is found in the secretory vesicle. Functionally, binds to oocyte zona pellucida in vivo. May play a role in the fertilization process and/or early embryonic development. The chain is Oviduct-specific glycoprotein (OVGP1) from Ovis aries (Sheep).